Reading from the N-terminus, the 333-residue chain is Probable tRNA-dihydrouridine synthase 1 (333 aa).

Residues 17 to 19 (PMA) and glutamine 71 contribute to the FMN site. Cysteine 102 (proton donor) is an active-site residue. FMN-binding positions include lysine 141, 202–204 (NGD), and 226–227 (GR).

This sequence belongs to the Dus family. Requires FMN as cofactor.

It carries out the reaction a 5,6-dihydrouridine in tRNA + NAD(+) = a uridine in tRNA + NADH + H(+). The catalysed reaction is a 5,6-dihydrouridine in tRNA + NADP(+) = a uridine in tRNA + NADPH + H(+). Functionally, catalyzes the synthesis of 5,6-dihydrouridine (D), a modified base found in the D-loop of most tRNAs, via the reduction of the C5-C6 double bond in target uridines. The chain is Probable tRNA-dihydrouridine synthase 1 (dus1) from Bacillus subtilis (strain 168).